We begin with the raw amino-acid sequence, 656 residues long: Translation factor GUF1 homolog, mitochondrial (656 aa).

Residues 55 to 236 (QRIRNFSIIA…EIVRRLPPPD (182 aa)) form the tr-type G domain. Residues 64–71 (AHVDHGKS), 129–133 (DTPGH), and 183–186 (NKID) each bind GTP.

Belongs to the TRAFAC class translation factor GTPase superfamily. Classic translation factor GTPase family. LepA subfamily.

Its subcellular location is the mitochondrion inner membrane. The catalysed reaction is GTP + H2O = GDP + phosphate + H(+). Its function is as follows. Promotes mitochondrial protein synthesis. May act as a fidelity factor of the translation reaction, by catalyzing a one-codon backward translocation of tRNAs on improperly translocated ribosomes. Binds to mitochondrial ribosomes in a GTP-dependent manner. This is Translation factor GUF1 homolog, mitochondrial from Aedes aegypti (Yellowfever mosquito).